We begin with the raw amino-acid sequence, 634 residues long: Mitochondrial Rho GTPase 1 (634 aa).

Over 1–604 (MLCCMRICVC…PRSEEDVEGK (604 aa)) the chain is Cytoplasmic. The region spanning 2–171 (LCCMRICVCG…FFLCQKAVTH (170 aa)) is the Miro 1 domain. Residues 11-18 (GDEGTGKS), 60-64 (DTSAV), and 116-119 (NKSD) each bind GTP. EF-hand domains follow at residues 187 to 222 (AAVA…CFEK) and 307 to 342 (EGYR…TPGL). Residues D200, D202, D204, Y206, E211, D320, D322, D324, and E331 each contribute to the Ca(2+) site. The segment at 399–419 (NPSTTAALKVTRPRKRRKRPG) is disordered. Basic residues predominate over residues 409–419 (TRPRKRRKRPG). Positions 423–589 (RNVVLGHIVG…FVHIAEAAME (167 aa)) constitute a Miro 2 domain. Residues 432–439 (GAPGSGKS), 468–472 (ELPGG), and 538–541 (LKAD) contribute to the GTP site. Residues 605-625 (WMSWGIALGAVVCAGAAAVMI) traverse the membrane as a helical; Anchor for type IV membrane protein segment. The Mitochondrial intermembrane portion of the chain corresponds to 626 to 634 (WRRVSGSGV).

The protein belongs to the mitochondrial Rho GTPase family.

Its subcellular location is the mitochondrion outer membrane. Mitochondrial GTPase involved in mitochondrial trafficking. Probably involved in control of anterograde transport of mitochondria and their subcellular distribution. The protein is Mitochondrial Rho GTPase 1 (gem1) of Emericella nidulans (strain FGSC A4 / ATCC 38163 / CBS 112.46 / NRRL 194 / M139) (Aspergillus nidulans).